The sequence spans 38 residues: Cytochrome b6-f complex subunit 5 (38 aa).

Residues 5–25 (LLLGIVLGLIPVTLAGLFVAA) form a helical membrane-spanning segment.

Belongs to the PetG family. The 4 large subunits of the cytochrome b6-f complex are cytochrome b6, subunit IV (17 kDa polypeptide, PetD), cytochrome f and the Rieske protein, while the 4 small subunits are PetG, PetL, PetM and PetN. The complex functions as a dimer.

The protein localises to the cellular thylakoid membrane. Functionally, component of the cytochrome b6-f complex, which mediates electron transfer between photosystem II (PSII) and photosystem I (PSI), cyclic electron flow around PSI, and state transitions. PetG is required for either the stability or assembly of the cytochrome b6-f complex. This chain is Cytochrome b6-f complex subunit 5, found in Synechocystis sp. (strain ATCC 27184 / PCC 6803 / Kazusa).